Here is a 414-residue protein sequence, read N- to C-terminus: Patatin-like protein 1 (414 aa).

The PNPLA domain maps to 22–228; that stretch reads LSLDGGGVRG…TANNPTLVAM (207 aa). The GXGXXG signature appears at 26-31; that stretch reads GGGVRG. Positions 64 to 68 match the GXSXG motif; the sequence is GTSTG. The active-site Nucleophile is Ser66. Catalysis depends on Asp215, which acts as the Proton acceptor. Residues 215–217 carry the DGA/G motif; that stretch reads DGA. The residue at position 399 (Ser399) is a Phosphoserine.

Belongs to the patatin family. Phosphorylated at Ser-399 by CPK3. Phosphorylation enhances PLP1 activity towards phosphatidylcholine. As to expression, expressed specifically in roots and root hairs.

It is found in the cytoplasm. Functionally, possesses non-specific lipolytic acyl hydrolase (LAH) activity. Catalyzes the hydrolysis of the neutral lipids monogalactosyldiacylglycerol (MGDG), digalactosyldiacylglycerol (DGDG) and phosphatidylglycerol (PG), and less efficiently the polar lipids phosphatidylcholine (PC) and phosphatidylinositol (PI), but not the storage lipid triacylglycerol (TAG). May play a role in root development. This is Patatin-like protein 1 (PLP1) from Arabidopsis thaliana (Mouse-ear cress).